The following is a 37-amino-acid chain: Large ribosomal subunit protein bL36 (37 aa).

Belongs to the bacterial ribosomal protein bL36 family.

This chain is Large ribosomal subunit protein bL36, found in Syntrophomonas wolfei subsp. wolfei (strain DSM 2245B / Goettingen).